Reading from the N-terminus, the 185-residue chain is Peptidyl-tRNA hydrolase (185 aa).

Position 14 (tyrosine 14) interacts with tRNA. The Proton acceptor role is filled by histidine 19. Positions 64, 66, and 112 each coordinate tRNA.

It belongs to the PTH family. Monomer.

The protein localises to the cytoplasm. It catalyses the reaction an N-acyl-L-alpha-aminoacyl-tRNA + H2O = an N-acyl-L-amino acid + a tRNA + H(+). Its function is as follows. Hydrolyzes ribosome-free peptidyl-tRNAs (with 1 or more amino acids incorporated), which drop off the ribosome during protein synthesis, or as a result of ribosome stalling. Catalyzes the release of premature peptidyl moieties from peptidyl-tRNA molecules trapped in stalled 50S ribosomal subunits, and thus maintains levels of free tRNAs and 50S ribosomes. In Lactobacillus acidophilus (strain ATCC 700396 / NCK56 / N2 / NCFM), this protein is Peptidyl-tRNA hydrolase.